The following is a 476-amino-acid chain: ATP synthase subunit beta (476 aa).

154 to 161 (GGAGVGKT) contacts ATP.

It belongs to the ATPase alpha/beta chains family. In terms of assembly, F-type ATPases have 2 components, CF(1) - the catalytic core - and CF(0) - the membrane proton channel. CF(1) has five subunits: alpha(3), beta(3), gamma(1), delta(1), epsilon(1). CF(0) has three main subunits: a(1), b(2) and c(9-12). The alpha and beta chains form an alternating ring which encloses part of the gamma chain. CF(1) is attached to CF(0) by a central stalk formed by the gamma and epsilon chains, while a peripheral stalk is formed by the delta and b chains.

It localises to the cell inner membrane. It carries out the reaction ATP + H2O + 4 H(+)(in) = ADP + phosphate + 5 H(+)(out). In terms of biological role, produces ATP from ADP in the presence of a proton gradient across the membrane. The catalytic sites are hosted primarily by the beta subunits. The sequence is that of ATP synthase subunit beta from Nitrobacter winogradskyi (strain ATCC 25391 / DSM 10237 / CIP 104748 / NCIMB 11846 / Nb-255).